The sequence spans 680 residues: MADAVGEVLEGSWNQDLADALDSAVCDLNSDQDGVIQVRDLSPPQRAKLWMIALNVSGKGDSLSSWDGVLDLPEQTLIHSRSQQLIDELGIPVEEGRDLVSDVESVITFYCKSRNVTFTPDLSWPHILKPLLGLQLSRKDLYNCFYAIMNKYIPRDCIVKGRPFHLFRLLLQYHEPEFCSFLDTKKITPDSYAINWLGSLFSSHCLPEVTQALWDVYLQQADPFLIFFLMLIILVNAKDNILIQEGDNKEEIIKMLEQSPSLLEAEDIEDLFSLAQYYNSKTPLSLRKENHNLFGSSLVALKEEDMDLSQALCLPVSVPEILQANQLQPEGVRFFVVDCRPAEQYNAGHLSTAFHLDSDLMLHNPSELALSVKSLLEAQKQSLESGSVASGEHLCFMGSGREEEDMYMNMVLAHFLQKNKEFVSIAKGGFMALQQHLADINVEGPDNVYVHWIVSTSGSHSSLSSADGELNSTDGKGVKSLVNKMTFALKSKSVNVKEKVISFIENTSTPVERHVSSSDRVGKPYRGVKPVFSIGDEEEYDTDEIDSSSISDDDRKEIVNIQTWINKPDVKHHIPCNEVKETGHMFPSHLLITATHMYCLREIAARKGFAYIQSRQALNSVVKITSKKKHPELITFKFGNNNAAGVEIVAVERYLIPNAGDATKVIKQQIMKVLDALESS.

The Rab-GAP TBC domain occupies 40 to 221 (DLSPPQRAKL…ALWDVYLQQA (182 aa)). One can recognise a Rhodanese domain in the interval 330 to 442 (EGVRFFVVDC…LQQHLADINV (113 aa)).

The protein localises to the golgi apparatus. It localises to the trans-Golgi network. It is found in the cytoplasmic vesicle. Putative Rab GTPase-activating protein which plays a role in vesicular trafficking. Involved in endosome-to-Golgi trafficking. Acts as a bridging protein by binding simultaneously to golgins, located at the trans-Golgi, and to the WASH complex, located on endosome-derived vesicles. Plays a role in brain development. May act as a general inhibitor of innate immunity signaling. In Danio rerio (Zebrafish), this protein is TBC1 domain family member 23 (tbc1d23).